Reading from the N-terminus, the 1226-residue chain is Chromosome-associated kinesin KIF4 (1226 aa).

A Kinesin motor domain is found at 8-337 (PVRVALRCRP…LRYADRARKI (330 aa)). 87 to 94 (GQTGSGKT) is an ATP binding site. Positions 351-1006 (ELQRLKLQVQ…YKQKLALLHV (656 aa)) form a coiled coil. The segment covering 494–505 (EAASFPVPEEDS) has biased composition (acidic residues). 3 disordered regions span residues 494–516 (EAAS…GFTT), 722–741 (QRQK…GMEG), and 1052–1078 (DLLS…KQSK). Residues 722–735 (QRQKEAMEKRKDSQ) are compositionally biased toward basic and acidic residues. The globular stretch occupies residues 1007–1226 (ASGKKLHNIL…SGCSAITEDE (220 aa)). Positions 1053 to 1064 (LLSESESEEESD) are enriched in acidic residues.

Belongs to the TRAFAC class myosin-kinesin ATPase superfamily. Kinesin family. Chromokinesin subfamily. Requires [2Fe-2S] cluster as cofactor. [4Fe-4S] cluster is required as a cofactor. Expressed in oocytes, eggs, testes and brain.

The protein localises to the nucleus. Its subcellular location is the chromosome. The protein resides in the cytoplasm. It localises to the cytoskeleton. Its function is as follows. Iron-sulfur (Fe-S) cluster binding motor protein that has a role in chromosome segregation during mitosis. Required for mitotic chromosomal positioning and bipolar spindle stabilization. The sequence is that of Chromosome-associated kinesin KIF4 (kif4) from Xenopus laevis (African clawed frog).